The primary structure comprises 199 residues: Probable adenylyl-sulfate kinase (199 aa).

An ATP-binding site is contributed by 34–41; that stretch reads GLSGSGKS. The active-site Phosphoserine intermediate is S108.

The protein belongs to the APS kinase family.

The enzyme catalyses adenosine 5'-phosphosulfate + ATP = 3'-phosphoadenylyl sulfate + ADP + H(+). It functions in the pathway sulfur metabolism; hydrogen sulfide biosynthesis; sulfite from sulfate: step 2/3. Catalyzes the synthesis of activated sulfate. The protein is Probable adenylyl-sulfate kinase (yisZ) of Bacillus subtilis (strain 168).